The chain runs to 28 residues: leu operon leader peptide (28 aa).

Its function is as follows. Involved in control of the biosynthesis of leucine. The chain is leu operon leader peptide (leuL) from Salmonella typhimurium (strain LT2 / SGSC1412 / ATCC 700720).